Consider the following 199-residue polypeptide: NAD(P)H dehydrogenase (quinone) (199 aa).

One can recognise a Flavodoxin-like domain in the interval 4-190 (VLVLYYSSYG…TGARYQGRKI (187 aa)). Residues 10–15 (SSYGHL) and 78–80 (TRF) contribute to the FMN site. Y12 is a binding site for NAD(+). W98 contributes to the substrate binding site. FMN contacts are provided by residues 113 to 119 (STATQHG) and H134.

Belongs to the WrbA family. The cofactor is FMN.

The enzyme catalyses a quinone + NADH + H(+) = a quinol + NAD(+). It catalyses the reaction a quinone + NADPH + H(+) = a quinol + NADP(+). This chain is NAD(P)H dehydrogenase (quinone), found in Caulobacter vibrioides (strain ATCC 19089 / CIP 103742 / CB 15) (Caulobacter crescentus).